The primary structure comprises 110 residues: Protein RALF-like 4 (110 aa).

The N-terminal stretch at 1–23 (MGVKMLLIFGLLILAMVAKSVNA) is a signal peptide. The propeptide at 24-58 (TYPLTKSCINGQGCIGEDDELESLMDSETNRRQLA) is removed in mature form. 2 disulfides stabilise this stretch: C76/C86 and C99/C105.

The protein belongs to the plant rapid alkalinization factor (RALF) family. Post-translationally, proteolytically cleaved, probably by S1P, a subtilisin-like serine protease (subtilase).

The protein localises to the secreted. Functionally, cell signaling peptide that may regulate plant stress, growth, and development. Mediates a rapid alkalinization of extracellular space by mediating a transient increase in the cytoplasmic Ca(2+) concentration leading to a calcium-dependent signaling events through a cell surface receptor and a concomitant activation of some intracellular mitogen-activated protein kinases. This chain is Protein RALF-like 4 (RALFL4), found in Arabidopsis thaliana (Mouse-ear cress).